Reading from the N-terminus, the 168-residue chain is Ribosome-binding factor A (168 aa).

The segment covering Arg-125 to Pro-138 has biased composition (basic and acidic residues). The tract at residues Arg-125–Arg-168 is disordered.

This sequence belongs to the RbfA family. Monomer. Binds 30S ribosomal subunits, but not 50S ribosomal subunits or 70S ribosomes.

Its subcellular location is the cytoplasm. One of several proteins that assist in the late maturation steps of the functional core of the 30S ribosomal subunit. Associates with free 30S ribosomal subunits (but not with 30S subunits that are part of 70S ribosomes or polysomes). Required for efficient processing of 16S rRNA. May interact with the 5'-terminal helix region of 16S rRNA. The polypeptide is Ribosome-binding factor A (Mycolicibacterium gilvum (strain PYR-GCK) (Mycobacterium gilvum (strain PYR-GCK))).